The sequence spans 604 residues: MDVRRRSEKPAYPTKEFAAGEKPLKPHKQQQEQDNSLLIASDALPLPLYLTNGLFFTMFFSVMYYLLSRWREKIRNSTPLHVVTFSELVAIASLIASVIYLLGFFGIGFVQSFVSRDNNDECWDEEDENDEQFLLEEDSRRGPATTLGCTAVPPPPALQIVPMVPPQPSKVAAMSEKPAPLVTPAASEEDEEIIKSVVQGKMPSYSLESKLGDCKRAASIRKEALQRITGKSLEGLPLEGFDYESILGQCCEMPIGYVQIPVGIAGPLLLDGREYSVPMATTEGCLVASTNRGCKAIYASGGATSVLLRDGMTRAPCVRFGTAKRAAELKFFVEDPVKFETLAAVFNQSSRFARLQRIQCAIAGKNLYMRFVCSTGDAMGMNMVSKGVQNVLDYLQNEYPDMDVIGISGNFCSDKKPAAVNWIEGRGKSVVCEAIITEEVVKKVLKTEVAALVELNMLKNLTGSAMAGALGGFNAHASNIVSAVYIATGQDPAQNIESSHCITMMEAVNDGKDLHVSVTMPSIEVGTVGGGTQLASQSACLNLLGVKGANREVPGSNARLLATIVAGSVLAGELSLMSAISAGQLVKSHMKYNRSTKDVTKASS.

Residues 1–31 form a disordered region; sequence MDVRRRSEKPAYPTKEFAAGEKPLKPHKQQQ. The next 2 helical transmembrane spans lie at 40–62 and 90–110; these read ASDALPLPLYLTNGLFFTMFFSV and AIASLIASVIYLLGFFGIGFV. The interval 111-189 is linker; it reads QSFVSRDNND…PLVTPAASEE (79 aa). A catalytic region spans residues 190-604; the sequence is DEEIIKSVVQ…STKDVTKASS (415 aa). The Charge relay system role is filled by glutamate 283. N-linked (GlcNAc...) asparagine glycosylation occurs at asparagine 347. The Charge relay system role is filled by lysine 415. A glycan (N-linked (GlcNAc...) asparagine) is linked at asparagine 460. The active-site Charge relay system is aspartate 491. Histidine 589 functions as the Proton donor in the catalytic mechanism. A glycan (N-linked (GlcNAc...) asparagine) is linked at asparagine 593.

Belongs to the HMG-CoA reductase family. As to expression, found in protoplasts and leaves submitted to stress. Low levels found in apexes, anthers and roots.

The protein resides in the endoplasmic reticulum membrane. The catalysed reaction is (R)-mevalonate + 2 NADP(+) + CoA = (3S)-3-hydroxy-3-methylglutaryl-CoA + 2 NADPH + 2 H(+). It functions in the pathway metabolic intermediate biosynthesis; (R)-mevalonate biosynthesis; (R)-mevalonate from acetyl-CoA: step 3/3. Catalyzes the synthesis of mevalonate, the specific precursor of all isoprenoid compounds present in plants. Possible role in plant defense mechanisms as well as in the cell cycle. In Nicotiana sylvestris (Wood tobacco), this protein is 3-hydroxy-3-methylglutaryl-coenzyme A reductase (HMGR).